A 147-amino-acid chain; its full sequence is Large ribosomal subunit protein uL22 (147 aa).

The disordered stretch occupies residues 110–147 (EEKKTVAKKAPAAKKTTTTKAPAKKTTSTKKATAKKES). The span at 117–140 (KKAPAAKKTTTTKAPAKKTTSTKK) shows a compositional bias: low complexity.

This sequence belongs to the universal ribosomal protein uL22 family. As to quaternary structure, part of the 50S ribosomal subunit.

Functionally, this protein binds specifically to 23S rRNA; its binding is stimulated by other ribosomal proteins, e.g. L4, L17, and L20. It is important during the early stages of 50S assembly. It makes multiple contacts with different domains of the 23S rRNA in the assembled 50S subunit and ribosome. The globular domain of the protein is located near the polypeptide exit tunnel on the outside of the subunit, while an extended beta-hairpin is found that lines the wall of the exit tunnel in the center of the 70S ribosome. The polypeptide is Large ribosomal subunit protein uL22 (Campylobacter jejuni subsp. jejuni serotype O:6 (strain 81116 / NCTC 11828)).